The following is an 862-amino-acid chain: Axin-1 (862 aa).

The disordered stretch occupies residues 1–78; it reads MNIQEQGFPL…GYEPEGSASP (78 aa). A Tankyrase-binding motif motif is present at residues 20-29; that stretch reads APRPPVPGEE. 2 positions are modified to phosphoserine; by CK1: S75 and S77. An RGS domain is found at 88 to 211; that stretch reads SLHSLLDDQD…LKSDIYLEYT (124 aa). Positions 209 to 338 are interaction with TP53; the sequence is EYTRTGSESP…DADTLSLTDS (130 aa). Disordered regions lie at residues 215–289 and 316–344; these read SESP…YSEG and TSANDSEQQSLSSDADTLSLTDSSVDGIP. S217 is subject to Phosphoserine; by CK1. The span at 242 to 258 shows a compositional bias: acidic residues; it reads NEDEEWKCDQDMDEDDG. Low complexity predominate over residues 325–339; the sequence is SLSSDADTLSLTDSS. The tract at residues 348–433 is interaction with GSK3B; the sequence is IRKQHRREMQ…DGDPSSGPPG (86 aa). The segment at 353 to 411 is interaction with SIAH1 and SIAH2; that stretch reads RREMQESVQVNGRVPLPHIPRTYRVPKEVRVEPQKFAEELIHRLEAVQRTREAEEKLEE. Residues 413–441 are disordered; sequence LKRVRMEEEGEDGDPSSGPPGPCHKLPPA. Positions 429 to 441 are enriched in pro residues; that stretch reads SGPPGPCHKLPPA. The interaction with CTNNB1 stretch occupies residues 434–502; the sequence is PCHKLPPAPA…SPDSGHVAKM (69 aa). The residue at position 469 (S469) is a Phosphoserine; by CK1. Residues 480 to 500 form a disordered region; the sequence is RTPGRQSPGPGHRSPDSGHVA. Phosphothreonine; by GSK3-beta is present on T481. Phosphoserine occurs at positions 486, 493, and 511. Positions 507-757 are interaction with RNF111; it reads GGAASGHGKH…PVLHVVPAVS (251 aa). The span at 531-544 shows a compositional bias: basic residues; the sequence is HHRHVHHHVHHSTA. Disordered stretches follow at residues 531–629 and 641–679; these read HHRH…AEKN and KEISRHRRTGHGSSGTRKPQPHENSRPLSLEHPWAGPQL. Positions 545 to 556 are enriched in basic and acidic residues; sequence RPKEQVEAEATR. Positions 575–789 are interaction with PPP2CA; the sequence is SRGYSESVGA…CDSIVVAYYF (215 aa). Residue S581 is modified to Phosphoserine. The tract at residues 677–752 is interaction with HIPK2; it reads PQLRTSVQPS…RPACAPVLHV (76 aa). Residues 780-862 enclose the DIX domain; sequence CDSIVVAYYF…KIIGKVEKVD (83 aa). Glycyl lysine isopeptide (Lys-Gly) (interchain with G-Cter in SUMO) cross-links involve residues K857 and K860.

As to quaternary structure, homodimer. Interacts with ZBED3; the interaction is direct, enhanced by protein kinase GSK3B and casein kinase CSNK1E activities and decreases GSK3B-induced beta-catenin serine and threonine phosphorylations. Component of the beta-catenin destruction complex, containing at least, CTNNB1, an axin and GSK3B, that regulates CTNNB1 protein levels through phosphorylation and ubiquitination. Interacts with CTNNB1 (via the armadillo repeats 2-7). Interacts with GSK3B; the interaction hyperphosphorylates CTNNB1 leading to its ubiquitination and destruction. Component of the AXIN1-HIPK2-TP53 complex. Interacts directly in the complex with TP53 and HIPK2. Interacts with DAXX; the interaction stimulates the interaction of DAXX with TP53, stimulates 'Ser-46' phosphorylation of TP53 and induces cell death on UV irradiation. Also binds APC, SMAD6, SMAD7 and RNF111. Interacts with DIXDC1; prevents interaction with MAP3K1. Interacts with MAP3K4. Interacts with ANKRD6 and AIDA. Interacts with MDFI; the interaction decreases AXIN1-mediated JUN N-terminal kinase (JNK) activation. Interacts with MDFIC; the interaction inhibits beta-cateninin-mediated signaling and AXIN1-mediated JUN N-terminal kinase (JNK) activation. Interacts with LRP5 (via its phosphorylated PPPSP motifs); the interaction is stimulated by WNT1 and GSK3B and activates beta-catenin signaling. Interacts (via the C-terminal) with PPP1CA; the interaction dephosphorylates AXIN1 and regulates interaction with GSK3B. Interacts with PPP2CA; the interaction dephosphorylates AXIN1. Interacts with MACF1. Found in a complex composed of MACF1, APC, AXIN1, CTNNB1 and GSK3B. Interacts with TNKS. Interacts with DAB2; the interaction is mutually exclusive with the AXIN1:PPP1CA interaction. Interacts with WDR26. Interacts with GID8. Interacts with SIAH1 and SIAH2; both probably catalyze AXIN1 ubiquitination and subsequent proteasome-mediated ubiquitin-dependent degradation. Interaction with GSK3B and AXIN1 is competitive. Phosphorylation and dephosphorylation of AXIN1 regulates assembly and function of the beta-catenin complex. Phosphorylated by CK1 and GSK3B. Dephosphorylated by PPP1CA and PPP2CA. Phosphorylation by CK1 enhances binding of GSK3B to AXIN1. Post-translationally, ADP-ribosylated by tankyrase TNKS and TNKS2. Poly-ADP-ribosylated protein is recognized by RNF146, followed by ubiquitination at 'Lys-48' and subsequent activation of the Wnt signaling pathway. In terms of processing, ubiquitinated by RNF146 when poly-ADP-ribosylated, leading to its degradation and subsequent activation of the Wnt signaling pathway. Sumoylation at Lys-857 and Lys-860 prevents ubiquitination and degradation. Sumoylation is required for AXIN1-mediated JNK activation. Deubiquitinated by USP34, deubiquitinated downstream of beta-catenin stabilization step: deubiquitination is important for nuclear accumulation during Wnt signaling to positively regulate beta-catenin (CTNBB1)-mediated transcription. Ubiquitination by SIAH1 and SIAH2 induces its proteasomal degradation as part of the activation of the Wnt signaling pathway. In terms of tissue distribution, ubiquitously expressed.

It localises to the cytoplasm. The protein localises to the nucleus. Its subcellular location is the membrane. It is found in the cell membrane. Functionally, component of the beta-catenin destruction complex required for regulating CTNNB1 levels through phosphorylation and ubiquitination, and modulating Wnt-signaling. Controls dorsoventral patterning via two opposing effects; down-regulates CTNNB1 to inhibit the Wnt signaling pathway and ventralize embryos, but also dorsalizes embryos by activating a Wnt-independent JNK signaling pathway. In Wnt signaling, probably facilitates the phosphorylation of CTNNB1 and APC by GSK3B. Likely to function as a tumor suppressor. Enhances TGF-beta signaling by recruiting the RNF111 E3 ubiquitin ligase and promoting the degradation of inhibitory SMAD7. Also a component of the AXIN1-HIPK2-TP53 complex which controls cell growth, apoptosis and development. Facilitates the phosphorylation of TP53 by HIPK2 upon ultraviolet irradiation. This is Axin-1 (AXIN1) from Homo sapiens (Human).